The following is a 125-amino-acid chain: Large ribosomal subunit protein bL17 (125 aa).

This sequence belongs to the bacterial ribosomal protein bL17 family. Part of the 50S ribosomal subunit. Contacts protein L32.

The protein is Large ribosomal subunit protein bL17 of Syntrophus aciditrophicus (strain SB).